We begin with the raw amino-acid sequence, 512 residues long: Calcium-dependent protein kinase 18 (512 aa).

The segment at methionine 1–lysine 25 is disordered. Glycine 2 carries N-myristoyl glycine lipidation. One can recognise a Protein kinase domain in the interval tyrosine 52–valine 312. ATP-binding positions include leucine 58 to threonine 66 and lysine 81. Aspartate 178 serves as the catalytic Proton acceptor. Residues alanine 318 to leucine 348 form an autoinhibitory domain region. EF-hand domains lie at glutamate 355–tryptophan 390, leucine 392–leucine 427, lysine 434–isoleucine 469, and leucine 472–serine 499. Ca(2+)-binding residues include aspartate 368, aspartate 370, asparagine 372, threonine 374, glutamate 379, aspartate 405, asparagine 407, aspartate 409, glutamate 416, aspartate 447, aspartate 449, aspartate 451, tyrosine 453, glutamate 458, aspartate 477, aspartate 479, aspartate 481, lysine 483, and glutamate 488.

This sequence belongs to the protein kinase superfamily. Ser/Thr protein kinase family. CDPK subfamily. As to quaternary structure, interacts with MPK5. Autophosphorylated. Phosphorylated by MPK5.

It localises to the cell membrane. It carries out the reaction L-seryl-[protein] + ATP = O-phospho-L-seryl-[protein] + ADP + H(+). The catalysed reaction is L-threonyl-[protein] + ATP = O-phospho-L-threonyl-[protein] + ADP + H(+). With respect to regulation, activated by calcium. Autophosphorylation may play an important role in the regulation of the kinase activity. In terms of biological role, may play a role in signal transduction pathways that involve calcium as a second messenger. Functions upstream of MPK5 in a signaling pathway that represses defense gene expression and negatively regulates resistance to rice blast fungus. Phosphorylates MPK5 at Thr-14 and Thr-32 and activates MPK5 independently of MAP kinase kinase (MKK) phosphorylation. May be involved in arbuscular mycorrhizal presymbiotic phase signaling. Phosphorylates the elicitor-responsive protein ERG1 in vitro. Phosphorylation is calcium-dependent. This is Calcium-dependent protein kinase 18 from Oryza sativa subsp. japonica (Rice).